The sequence spans 322 residues: Fructose-1,6-bisphosphatase class 1 3 (322 aa).

Residues Glu84, Asp103, Leu105, and Asp106 each coordinate Mg(2+). Substrate contacts are provided by residues 106–109, Asn198, and Lys262; that span reads DGSS. A Mg(2+)-binding site is contributed by Glu268.

It belongs to the FBPase class 1 family. As to quaternary structure, homotetramer. It depends on Mg(2+) as a cofactor.

The protein resides in the cytoplasm. The enzyme catalyses beta-D-fructose 1,6-bisphosphate + H2O = beta-D-fructose 6-phosphate + phosphate. It participates in carbohydrate biosynthesis; gluconeogenesis. The chain is Fructose-1,6-bisphosphatase class 1 3 from Pseudoalteromonas translucida (strain TAC 125).